We begin with the raw amino-acid sequence, 221 residues long: Transcription repressor OFP8 (221 aa).

Residues 124-138 (EDEGDKEESEDDDSD) are compositionally biased toward acidic residues. Residues 124–147 (EDEGDKEESEDDDSDTLFSSRSFS) are disordered. In terms of domain architecture, OVATE spans 158–217 (VVKKSKDPYEDFRTSMVEMIVERQIFAPAELQQLLQCFLSLNSRQHHKVIVQVFLEIYAT).

Expressed in roots, rosette and cauline leaves, shoots, stems, flower buds and siliques.

It localises to the nucleus. In terms of biological role, transcriptional repressor that regulates multiple aspects of plant growth and development through the regulation of BEL1-LIKE (BLH) and KNOX TALE (KNAT) homeodomain transcription factors. In Arabidopsis thaliana (Mouse-ear cress), this protein is Transcription repressor OFP8 (OFP8).